The primary structure comprises 520 residues: Laccase-1 (520 aa).

An N-terminal signal peptide occupies residues 1-21 (MSRFHSLLAFVVASLTAVAHA). Plastocyanin-like domains follow at residues 23–148 (IGPV…FVVY) and 160–302 (VDND…ILRY). 2 N-linked (GlcNAc...) asparagine glycosylation sites follow: Asn72 and Asn75. Residues His85, His87, His130, and His132 each coordinate Cu cation. Disulfide bonds link Cys106/Cys509 and Cys138/Cys226. N-linked (GlcNAc...) asparagine glycans are attached at residues Asn229, Asn238, Asn354, and Asn361. Positions 369-491 (TVPVLLQIIS…AGFAVVFAED (123 aa)) constitute a Plastocyanin-like 3 domain. Positions 416, 419, 421, 473, 474, 475, and 479 each coordinate Cu cation.

The protein belongs to the multicopper oxidase family. As to quaternary structure, homodimer. Cu cation serves as cofactor.

It is found in the secreted. It carries out the reaction 4 hydroquinone + O2 = 4 benzosemiquinone + 2 H2O. Lignin degradation and detoxification of lignin-derived products. The polypeptide is Laccase-1 (Trametes villosa (White-rot fungus)).